Reading from the N-terminus, the 311-residue chain is 4-diphosphocytidyl-2-C-methyl-D-erythritol kinase (311 aa).

Lysine 16 is an active-site residue. Residue 100–110 (PIGAGLAGGSS) coordinates ATP. Aspartate 142 is a catalytic residue.

It belongs to the GHMP kinase family. IspE subfamily.

It catalyses the reaction 4-CDP-2-C-methyl-D-erythritol + ATP = 4-CDP-2-C-methyl-D-erythritol 2-phosphate + ADP + H(+). Its pathway is isoprenoid biosynthesis; isopentenyl diphosphate biosynthesis via DXP pathway; isopentenyl diphosphate from 1-deoxy-D-xylulose 5-phosphate: step 3/6. In terms of biological role, catalyzes the phosphorylation of the position 2 hydroxy group of 4-diphosphocytidyl-2C-methyl-D-erythritol. This is 4-diphosphocytidyl-2-C-methyl-D-erythritol kinase from Prochlorococcus marinus (strain AS9601).